We begin with the raw amino-acid sequence, 358 residues long: MAQEVDTAQGAEMRRGAGAARGRASWCWALALLWLAVVPGWSRVSGIPSRRHWPVPYKRFDFRPKPDPYCQAKYTFCPTGSPIPVMEGDDDIEVFRLQAPVWEFKYGDLLGHLKIMHDAIGFRSTLTGKNYTMEWYELFQLGNCTFPHLRPEMDAPFWCNQGAACFFEGIDDVHWKENGTLVQVATISGNMFNQMAKWVKQDNETGIYYETWNVKASPEKGAETWFDSYDCSKFVLRTFNKLAEFGAEFKNIETNYTRIFLYSGEPTYLGNETSVFGPTGNKTLGLAIKRFYYPFKPHLPTKEFLLSLLQIFDAVIVHKQFYLFYNFEYWFLPMKFPFIKITYEEIPLPIRNKTLSGL.

At Met1 to Arg23 the chain is on the cytoplasmic side. The chain crosses the membrane as a helical; Signal-anchor for type II membrane protein span at residues Ala24 to Gly40. The Lumenal segment spans residues Trp41 to Leu358. Cystine bridges form between Cys70–Cys159 and Cys77–Cys165. The active-site Proton acceptor is the His117. N-linked (GlcNAc...) asparagine glycosylation is found at Asn130, Asn143, Asn178, and Asn203. Residue Cys231 is the Nucleophile; Acyl-thioester intermediate of the active site. 3 N-linked (GlcNAc...) asparagine glycosylation sites follow: Asn255, Asn271, and Asn281. The membrane-anchoring stretch occupies residues Phe304–Tyr343. Asn352 carries an N-linked (GlcNAc...) asparagine glycan.

Belongs to the CLN5 family. In terms of assembly, multimer. Interacts with SORT1, RAB5A and RAB7A. Interacts with PPT1, TPP1, CLN3, CLN6, CLN8, ATP5F1A and ATP5F1B. In terms of processing, N-glycosylated with both high mannose and complex type sugars. Glycosylation is important for proper folding and trafficking to the lysosomes. Post-translationally, the type II membrane signal anchor is proteolytically cleaved to produce a mature form that is transported to the lysosomes (Bis(monoacylglycero)phosphate synthase CLN5, secreted form). Can undergo proteolytic cleavage at the C-terminus, probably by a cysteine protease and may involve the removal of approximately 10-15 residues from the C-terminal end. As to expression, ubiquitous.

Its subcellular location is the lysosome. It is found in the membrane. It catalyses the reaction S-hexadecanoyl-L-cysteinyl-[protein] + H2O = L-cysteinyl-[protein] + hexadecanoate + H(+). The enzyme catalyses 2 1-acyl-sn-glycero-3-phospho-(1'-sn-glycerol) = 1-acyl-sn-glycero-3-phospho-(3'-acyl-sn-1'-glycerol) + sn-glycero-3-phospho-(1'-sn-glycerol). It carries out the reaction 2 1-(9Z-octadecenoyl)-sn-glycero-3-phospho-(1'-sn-glycerol) = 1-(9Z-octadecenoyl)-sn-glycero-3-phospho-(3'-(9Z-octadecenoyl)-1'-sn-glycerol) + sn-glycero-3-phospho-(1'-sn-glycerol). The catalysed reaction is 2 1-octadecanoyl-sn-glycero-3-phospho-(1'-sn-glycerol) = 1-octadecanoyl-sn-glycero-3-phospho-(3'-octadecanoyl-1'-sn-glycerol) + sn-glycero-3-phospho-(1'-sn-glycerol). It catalyses the reaction 2 1-hexadecanoyl-sn-glycero-3-phospho-(1'-sn-glycerol) = 1-hexadecanoyl-sn-glycero-3-phospho-(3'-hexadecanoyl-1'-sn-glycerol) + sn-glycero-3-phospho-(1'-sn-glycerol). The enzyme catalyses 2 1-tetradecanoyl-sn-glycero-3-phospho-(1'-sn-glycerol) = 1-tetradecanoyl-sn-glycero-3-phospho-(3'-tetradecanoyl-1'-sn-glycerol) + sn-glycero-3-phospho-(1'-sn-glycerol). Its activity is regulated as follows. Anionic phospholipids activate bis(monoacylglycero)phosphate (BMP) synthase activity. Amiodarone, a cationic amphiphilic drug inhibits BMP synthase activity towards liposomal lysophosphatidylglycerol. Palmostatin B inhibits palmitoyl protein thioesterase activity. Catalyzes the synthesis of bis(monoacylglycero)phosphate (BMP) via transacylation of 2 molecules of lysophosphatidylglycerol (LPG). BMP also known as lysobisphosphatidic acid plays a key role in the formation of intraluminal vesicles and in maintaining intracellular cholesterol homeostasis. Can use only LPG as the exclusive lysophospholipid acyl donor for base exchange and displays BMP synthase activity towards various LPGs (LPG 14:0, LPG 16:0, LPG 18:0, LPG 18:1) with a higher preference for longer chain lengths. Plays a role in influencing the retrograde trafficking of lysosomal sorting receptors SORT1 and IGF2R from the endosomes to the trans-Golgi network by controlling the recruitment of retromer complex to the endosomal membrane. Regulates the localization and activation of RAB7A which is required to recruit the retromer complex to the endosomal membrane. Its function is as follows. Exhibits palmitoyl protein thioesterase (S-depalmitoylation) activity in vitro and most likely plays a role in protein S-depalmitoylation. The sequence is that of Bis(monoacylglycero)phosphate synthase CLN5 (CLN5) from Homo sapiens (Human).